A 105-amino-acid chain; its full sequence is Flagellar transcriptional regulator FlhD (105 aa).

The protein belongs to the FlhD family. As to quaternary structure, homodimer; disulfide-linked. Forms a heterohexamer composed of two FlhC and four FlhD subunits. Each FlhC binds a FlhD dimer, forming a heterotrimer, and a hexamer assembles by dimerization of two heterotrimers.

It is found in the cytoplasm. Its function is as follows. Functions in complex with FlhC as a master transcriptional regulator that regulates transcription of several flagellar and non-flagellar operons by binding to their promoter region. Activates expression of class 2 flagellar genes, including fliA, which is a flagellum-specific sigma factor that turns on the class 3 genes. Also regulates genes whose products function in a variety of physiological pathways. This Ralstonia nicotianae (strain ATCC BAA-1114 / GMI1000) (Ralstonia solanacearum) protein is Flagellar transcriptional regulator FlhD.